The sequence spans 215 residues: Ankyrin repeat domain-containing protein 49 (215 aa).

2 ANK repeats span residues 81 to 110 (DGYT…NPNA) and 114 to 143 (LGWT…DVNA).

In terms of assembly, interacts with Bdbt; interaction promotes the stability of both complex members.

The protein resides in the cytoplasm. It localises to the cytosol. The protein localises to the cell membrane. In terms of biological role, required for regulating the establishment of planar cell polarity in the wing. Forms a complex with Bdbt which likely functions in the regulation of planar polarity by promoting the activity of Dco during planar polarity establishment. Within the complex, probably functions to stabilize Bdbt, while Bdbt directly promotes Dco activity in regulating phosphorylation of core proteins such as dsh, and asymmetric localization. The sequence is that of Ankyrin repeat domain-containing protein 49 from Drosophila melanogaster (Fruit fly).